The following is a 527-amino-acid chain: Fusicoccadiene C-8 hydroxylase (527 aa).

A helical membrane pass occupies residues 15 to 35 (GKPLLLFLILITLTYSLGIVF). The N-linked (GlcNAc...) asparagine glycan is linked to Asn-125. Cys-465 serves as a coordination point for heme. N-linked (GlcNAc...) asparagine glycosylation occurs at Asn-496.

Belongs to the cytochrome P450 family. Heme is required as a cofactor.

It is found in the membrane. It participates in mycotoxin biosynthesis. In terms of biological role, cytochrome P450 monooxygenase; part of the gene cluster that mediates the biosynthesis of the diterpene glucoside brassicicene C. In the first step of the brassicicene C biosynthesis, the bifunctional diterpene synthase bsc8 that possesses both prenyl transferase and terpene cyclase activity, converts isopentenyl diphosphate and dimethylallyl diphosphate into geranylgeranyl diphosphate (GGDP) that is further converted into fusicocca-2,10(14)-diene, the first precursor for brassicicene C. Fusicocca-2,10(14)-diene is then substrate of cytochrome P450 monooxygenase bsc1 for hydroxylation at the C-8 position. Oxidation at C-16 position to aldehyde is then catalyzed by the cytochrome P450 monooyxygenase bsc7, yielding fusicocca-2,10(14)-diene-8-beta,16-diol. Follows the isomerization of the double bond and reduction of aldehyde to alcohol catalyzed by the short-chain dehydrogenase/reductase bsc3 to yield the diol compound fusicocca-1,10(14)-diene-8 beta,16-diol. The next step is the oxidation at the C-3 position of fusicocca-2,10(14)-diene-8-beta,16-diol catalyzed by the alpha-ketoglutarate dependent dioxygenase bsc9, to produce a triol compound. Methylation of the hydroxy group at position 16 is performed by the methyltransferase bsc6. 16-O-methylation is followed by oxidation at the C-13 position to ketone and an alkyl shift of the methyl group leads to brassicicene C. Although the probable acetyltransferase bsc4 is included in the gene cluster, no acetylation reactions are necessary for brassicicene C biosynthesis. However, the fact that brassicicene E, which is a structurally related compound having an acetoxy group at position 12, was previously isolated from another strain of A.brassicicola suggests that the ATCC 96836 strain might also produce a small amount of brassicicene E. This chain is Fusicoccadiene C-8 hydroxylase, found in Alternaria brassicicola (Dark leaf spot agent).